A 247-amino-acid polypeptide reads, in one-letter code: Peroxisomal membrane protein 11A (247 aa).

The Cytoplasmic segment spans residues 1–83 (MDAFIRFTNQ…SVRATDLVPR (83 aa)). Residues 84 to 105 (ICLTLASLNRVIYFICDTVLFV) form a helical membrane-spanning segment. Over 106–219 (RSTGLASGVN…DQLGIYKSNP (114 aa)) the chain is Lumenal. A helical transmembrane segment spans residues 220–239 (GIIGLGGLVSSVAGIITVAY). Positions 220–239 (GIIGLGGLVSSVAGIITVAY) are required for homodimerization, interaction with PEX11G, and peroxisomal localization. Residues 240–247 (PQMKLKTQ) lie on the Cytoplasmic side of the membrane.

It belongs to the peroxin-11 family. As to quaternary structure, homodimer. Heterodimer with PEX11G. Probably interacts with COPB2 and COPA. Interacts with PEX19. Interacts with FIS1.

The protein resides in the peroxisome membrane. In terms of biological role, may be involved in peroxisomal proliferation and may regulate peroxisomes division. May mediate binding of coatomer proteins to the peroxisomal membrane. Promotes membrane protrusion and elongation on the peroxisomal surface. The polypeptide is Peroxisomal membrane protein 11A (PEX11A) (Bos taurus (Bovine)).